We begin with the raw amino-acid sequence, 122 residues long: Acidic phospholipase A2 2 (122 aa).

7 disulfides stabilise this stretch: Cys-26–Cys-115, Cys-28–Cys-44, Cys-43–Cys-95, Cys-49–Cys-122, Cys-50–Cys-88, Cys-57–Cys-81, and Cys-75–Cys-86. 3 residues coordinate Ca(2+): Tyr-27, Gly-29, and Gly-31. The active site involves His-47. Asp-48 provides a ligand contact to Ca(2+). Asp-89 is an active-site residue.

This sequence belongs to the phospholipase A2 family. Group II subfamily. D49 sub-subfamily. Ca(2+) is required as a cofactor. Expressed by the venom gland.

Its subcellular location is the secreted. It catalyses the reaction a 1,2-diacyl-sn-glycero-3-phosphocholine + H2O = a 1-acyl-sn-glycero-3-phosphocholine + a fatty acid + H(+). Snake venom phospholipase A2 (PLA2) that has high lipolytic activity. PLA2 catalyzes the calcium-dependent hydrolysis of the 2-acyl groups in 3-sn-phosphoglycerides. The protein is Acidic phospholipase A2 2 of Craspedocephalus gramineus (Bamboo pit viper).